A 305-amino-acid polypeptide reads, in one-letter code: Dermonecrotic toxin LrSicTox-alphaIA1ii (305 aa).

An N-terminal signal peptide occupies residues 1–18; sequence MLLYVTLILGCWSAFSES. Positions 19 to 26 are excised as a propeptide; it reads AETDVAER. Residue histidine 37 is part of the active site. Mg(2+)-binding residues include glutamate 57 and aspartate 59. The active-site Nucleophile is the histidine 73. 2 cysteine pairs are disulfide-bonded: cysteine 77–cysteine 83 and cysteine 79–cysteine 222. Aspartate 117 contacts Mg(2+). An N-linked (GlcNAc...) asparagine glycan is attached at asparagine 282.

This sequence belongs to the arthropod phospholipase D family. Class II subfamily. Class IIa sub-subfamily. Mg(2+) is required as a cofactor. In terms of tissue distribution, expressed by the venom gland.

The protein localises to the secreted. It carries out the reaction an N-(acyl)-sphingosylphosphocholine = an N-(acyl)-sphingosyl-1,3-cyclic phosphate + choline. The enzyme catalyses an N-(acyl)-sphingosylphosphoethanolamine = an N-(acyl)-sphingosyl-1,3-cyclic phosphate + ethanolamine. The catalysed reaction is a 1-acyl-sn-glycero-3-phosphocholine = a 1-acyl-sn-glycero-2,3-cyclic phosphate + choline. It catalyses the reaction a 1-acyl-sn-glycero-3-phosphoethanolamine = a 1-acyl-sn-glycero-2,3-cyclic phosphate + ethanolamine. Its activity is regulated as follows. Inhibited with low affinity by edelfosine. Its function is as follows. Dermonecrotic toxins cleave the phosphodiester linkage between the phosphate and headgroup of certain phospholipids (sphingolipid and lysolipid substrates), forming an alcohol (often choline) and a cyclic phosphate. This toxin acts on sphingomyelin (SM). It also acts on a broad range of lysophospholipids, like lysophosphatidylinositol (LPI), lysophosphatidylglycerol (LPG), lysophosphatidylethanolamine (LPE), lysobisphosphatidic acid (LBPA), lysophosphatidylserine (LPS) and lysophosphatidylcholines (LPC) of varying chain lengths. The substrate preference is LPI &gt; LPG &gt; LPS &gt; LPC &gt;&gt; LPE, LBPA. Furthermore, the enzyme also act on cyclic phosphatidic acid and lyso-platelet activating factor (LPAF, an alkyl-LPC). The enzyme does not act on sphingosylphosphorylcholine (SPC, also known as lyso-sphingomyelin) and PAF. The toxin may also act on ceramide phosphoethanolamine (CPE). It acts by transphosphatidylation, releasing exclusively cyclic phosphate products as second products. It does not exhibit detectable PLA1/2 activity. It induces dose-dependent hemolysis and dermonecrosis. Also induces increased vascular permeability, edema, inflammatory response, and platelet aggregation. This chain is Dermonecrotic toxin LrSicTox-alphaIA1ii, found in Loxosceles reclusa (Brown recluse spider).